Reading from the N-terminus, the 201-residue chain is Putative tRNA-binding protein YtpR (201 aa).

In terms of domain architecture, tRNA-binding spans 90-200; that stretch reads VDLSPKFVVG…GDYEAGDAFQ (111 aa).

This Bacillus subtilis (strain 168) protein is Putative tRNA-binding protein YtpR (ytpR).